The following is a 209-amino-acid chain: Immunoglobulin lambda-like polypeptide 1 (209 aa).

Residues 1-30 (MKLRVGQTLGTIPRQCEVLLLLLLLGLVDG) form the signal peptide. Residues 93 to 104 (VFGGGTQLTILG) are j region. The segment at 105–209 (QPKSDPLVTL…EKSVSPAECS (105 aa)) is c region. The region spanning 110-204 (PLVTLFLPSL…EGNTVEKSVS (95 aa)) is the Ig-like C1-type domain. Cysteine 131 and cysteine 190 are disulfide-bonded.

Interacts with VPREB1A. Interacts with SYNV1/HRD1 (via N-terminus); this interaction leads to increased IGLL1 ubiquitination and degradation in pre-B cells, possibly through a lysosomal, not proteasomal, pathway. In terms of tissue distribution, selectively expressed in pre-B lymphocytes.

The protein resides in the endoplasmic reticulum. It is found in the secreted. Functionally, critical for B-cell development. In Mus musculus (Mouse), this protein is Immunoglobulin lambda-like polypeptide 1 (Igll1).